Consider the following 260-residue polypeptide: Carbonic anhydrase 2 (260 aa).

An N-acetylserine modification is found at Ser2. A Phosphoserine modification is found at Ser2. The 257-residue stretch at 3-259 (HHWGYSKSNG…LKNRKIKASF (257 aa)) folds into the Alpha-carbonic anhydrase domain. The interval 16-39 (WHKEFPIANGDRQSPVDIDTGTAQ) is disordered. The Proton donor/acceptor role is filled by His64. Phosphoserine is present on Ser87. Zn(2+) contacts are provided by His94, His96, and His119. Ser165 carries the phosphoserine modification. 198-199 (TT) is a binding site for substrate. Position 232 is a phosphoserine (Ser232).

It belongs to the alpha-carbonic anhydrase family. Interacts with SLC4A4 and SLC26A6. Interaction with SLC4A7 regulates SLC4A7 transporter activity. Requires Zn(2+) as cofactor.

The protein localises to the cytoplasm. The protein resides in the cell membrane. It carries out the reaction hydrogencarbonate + H(+) = CO2 + H2O. It catalyses the reaction urea = cyanamide + H2O. Inhibited by acetazolamide. In terms of biological role, catalyzes the reversible hydration of carbon dioxide. Can also hydrate cyanamide to urea. Involved in the regulation of fluid secretion into the anterior chamber of the eye. Essential for bone resorption and osteoclast differentiation. Contributes to intracellular pH regulation in the duodenal upper villous epithelium during proton-coupled peptide absorption. Stimulates the chloride-bicarbonate exchange activity of SLC26A6. This chain is Carbonic anhydrase 2 (Ca2), found in Rattus norvegicus (Rat).